The primary structure comprises 382 residues: Gap junction alpha-1 protein (382 aa).

Over 2–23 (GDWSALGKLLDKVQAYSTAGGK) the chain is Cytoplasmic. Ser5 is subject to Phosphoserine. The chain crosses the membrane as a helical span at residues 24 to 44 (VWLSVLFIFRILLLGTAVESA). Topologically, residues 45–76 (WGDEQSAFRCNTQQPGCENVCYDKSFPISHVR) are extracellular. 2 disulfide bridges follow: Cys54-Cys192 and Cys187-Cys198. A helical transmembrane segment spans residues 77 to 97 (FWVLQIIFVSVPTLLYLAHVF). Residues 98-155 (YVMRKEEKLNKKEEELKVAQTDGVNVEMHLKQIEIKKFKYGIEEHGKVKMRGGLLRTY) lie on the Cytoplasmic side of the membrane. Lys144 is covalently cross-linked (Glycyl lysine isopeptide (Lys-Gly) (interchain with G-Cter in SUMO)). A helical membrane pass occupies residues 156 to 176 (IISILFKSVFEVAFLLIQWYI). Residues 177–207 (YGFSLSAVYTCKRDPCPHQVDCFLSRPTEKT) are Extracellular-facing. Residues 208-228 (IFIIFMLVVSLVSLALNIIEL) form a helical membrane-spanning segment. The Cytoplasmic portion of the chain corresponds to 229–382 (FYVFFKGVKD…SRPRPDDLEI (154 aa)). Residue Lys237 forms a Glycyl lysine isopeptide (Lys-Gly) (interchain with G-Cter in SUMO) linkage. An interaction with NOV region spans residues 244-382 (SDPYHATTGP…SRPRPDDLEI (139 aa)). The residue at position 247 (Tyr247) is a Phosphotyrosine. Ser255, Ser257, and Ser262 each carry phosphoserine. The interval 264-382 (KYAYFNGCSS…SRPRPDDLEI (119 aa)) is interaction with UBQLN4. At Cys271 the chain carries S-nitrosocysteine. Thr275 carries the phosphothreonine modification. Phosphoserine is present on residues Ser306, Ser314, and Ser325. Residues 317-332 (QNRMGQAGSTISNSHA) show a composition bias toward polar residues. The segment at 317–382 (QNRMGQAGST…SRPRPDDLEI (66 aa)) is disordered. Thr326 is modified (phosphothreonine). Residues Ser328, Ser330, Ser341, and Ser365 each carry the phosphoserine modification. Positions 362-374 (RPSSRASSRASSR) are enriched in low complexity. Ser368 is modified (phosphoserine; by PKC/PRKCG and PKC/PRKCD). Ser369 and Ser373 each carry phosphoserine.

The protein belongs to the connexin family. Alpha-type (group II) subfamily. As to quaternary structure, a connexon is composed of a hexamer of connexins. Interacts with CSNK1D. Interacts with RIC1/CIP150. Interacts (via C-terminus) with TJP1. Interacts (via C-terminus) with SRC (via SH3 domain). Interacts (not ubiquitinated) with UBQLN4 (via UBA domain). Interacts with CNST. Interacts with SGSM3. Interacts with NOV. Interacts with TMEM65. Interacts with ANK3/ANKG and PKP2. In terms of processing, phosphorylation at Ser-325, Ser-328 and Ser-330 by CK1 modulates gap junction assembly. Phosphorylated at Ser-368 by PRKCG; phosphorylation induces disassembly of gap junction plaques and inhibition of gap junction activity. Phosphorylation at Ser-368 by PRKCD triggers its internalization into small vesicles leading to proteasome-mediated degradation. Post-translationally, sumoylated with SUMO1, SUMO2 and SUMO3, which may regulate the level of functional Cx43 gap junctions at the plasma membrane. May be desumoylated by SENP1 or SENP2. Acetylated in the developing cortex; leading to delocalization from the cell membrane. In terms of processing, S-nitrosylation at Cys-271 is enriched at the muscle endothelial gap junction in arteries, it augments channel permeability and may regulate of smooth muscle cell to endothelial cell communication. Expressed in heart, non-sensory epithelial cells, and in fibrocytes of the spiral ligament and the spiral limbus. Expressed in bladder smooth muscle cells (at protein level). Expressed in astrocytes (at protein level).

It localises to the cell membrane. It is found in the cell junction. The protein resides in the gap junction. Its subcellular location is the endoplasmic reticulum. Functionally, gap junction protein that acts as a regulator of bladder capacity. A gap junction consists of a cluster of closely packed pairs of transmembrane channels, the connexons, through which materials of low MW diffuse from one cell to a neighboring cell. Negative regulator of bladder functional capacity: acts by enhancing intercellular electrical and chemical transmission, thus sensitizing bladder muscles to cholinergic neural stimuli and causing them to contract. May play a role in cell growth inhibition through the regulation of NOV expression and localization. Plays an essential role in gap junction communication in the ventricles. In terms of biological role, connexin 43 is possibly the ATP-induced pore of mouse macrophages. In Mus musculus (Mouse), this protein is Gap junction alpha-1 protein (Gja1).